Reading from the N-terminus, the 198-residue chain is Holliday junction branch migration complex subunit RuvA (198 aa).

Residues 1–63 form a domain I region; the sequence is MYDYIKGQLT…EDAHLLFGFH (63 aa). The domain II stretch occupies residues 64–142; the sequence is TEDEKDVFLK…EAPQETGHTK (79 aa). Residues 143–147 form a flexible linker region; it reads ARSNK. A domain III region spans residues 148–198; sequence AGNTQLDEAIEALLALGYKAKELKKIRAFFEETSETAEQYIKSALKLLMKG.

This sequence belongs to the RuvA family. As to quaternary structure, homotetramer. Forms an RuvA(8)-RuvB(12)-Holliday junction (HJ) complex. HJ DNA is sandwiched between 2 RuvA tetramers; dsDNA enters through RuvA and exits via RuvB. An RuvB hexamer assembles on each DNA strand where it exits the tetramer. Each RuvB hexamer is contacted by two RuvA subunits (via domain III) on 2 adjacent RuvB subunits; this complex drives branch migration. In the full resolvosome a probable DNA-RuvA(4)-RuvB(12)-RuvC(2) complex forms which resolves the HJ.

Its subcellular location is the cytoplasm. In terms of biological role, the RuvA-RuvB-RuvC complex processes Holliday junction (HJ) DNA during genetic recombination and DNA repair, while the RuvA-RuvB complex plays an important role in the rescue of blocked DNA replication forks via replication fork reversal (RFR). RuvA specifically binds to HJ cruciform DNA, conferring on it an open structure. The RuvB hexamer acts as an ATP-dependent pump, pulling dsDNA into and through the RuvAB complex. HJ branch migration allows RuvC to scan DNA until it finds its consensus sequence, where it cleaves and resolves the cruciform DNA. This Streptococcus pyogenes serotype M2 (strain MGAS10270) protein is Holliday junction branch migration complex subunit RuvA.